A 153-amino-acid polypeptide reads, in one-letter code: Penitrem biosynthesis cluster 1 protein I (153 aa).

It participates in secondary metabolite biosynthesis. In terms of biological role, part of the gene cluster that mediates the biosynthesis of the indole diterpenes penitrems. The geranylgeranyl diphosphate (GGPP) synthase ptmG catalyzes the first step in penitrem biosynthesis via conversion of farnesyl pyrophosphate and isopentyl pyrophosphate into geranylgeranyl pyrophosphate (GGPP). Condensation of indole-3-glycerol phosphate with GGPP by the prenyl transferase ptmC then forms 3-geranylgeranylindole (3-GGI). Epoxidation by the FAD-dependent monooxygenase ptmM leads to a epoxidized-GGI that is substrate of the terpene cyclase ptmB for cyclization to yield paspaline. Paspaline is subsequently converted to 13-desoxypaxilline by the cytochrome P450 monooxygenase ptmP, the latter being then converted to paxilline by the cytochrome P450 monooxygenase ptmQ. Paxilline is converted to beta-paxitriol via C-10 ketoreduction by the short-chain dehydrogenase ptmH which can be monoprenylated at the C-20 by the indole diterpene prenyltransferase ptmD. A two-step elimination (acetylation and elimination) process performed by the O-acetyltransferase ptmV and ptmI leads to the production of the prenylated form of penijanthine. The FAD-linked oxidoreductase ptmO then converts the prenylated form of penijanthine into PC-M5 which is in turn transformed into PC-M4 by the aromatic dimethylallyltransferase ptmE. Five sequential oxidative transformations performed by the cytochrome P450 monooxygenases ptmK, ptmU, ptmL, ptmN and ptmJ yield the various penitrem compounds. PtmK, ptmU and ptmM are involved in the formation of the key bicyclic ring of penitrem C via the formation of the intermediates secopenitrem D and penitrem D. PtmL catalyzes the epoxidation of penitrem D and C to yield penitrem B and F, respectively. PtmJ catalyzes the last benzylic hydroxylation to convert penitrem B to prenitrem E and penitrem F to penitrem A. The polypeptide is Penitrem biosynthesis cluster 1 protein I (Penicillium ochrochloron).